A 168-amino-acid polypeptide reads, in one-letter code: Tyrosine-protein phosphatase (168 aa).

The Tyrosine-protein phosphatase domain occupies phenylalanine 24–isoleucine 168. The Phosphocysteine intermediate role is filled by cysteine 119.

It belongs to the protein-tyrosine phosphatase family. Non-receptor class CDC14 subfamily.

The enzyme catalyses O-phospho-L-tyrosyl-[protein] + H2O = L-tyrosyl-[protein] + phosphate. Functionally, plays a role in the regulation and processing of late viral mRNAs by displaying RNA 5'-triphosphatase and diphosphatase activities. This chain is Tyrosine-protein phosphatase (PTP), found in Autographa californica nuclear polyhedrosis virus (AcMNPV).